An 804-amino-acid polypeptide reads, in one-letter code: MKRKERRINKDFGYNRKCVCHYEASQKRFCYSQYSCASVLYERVRDIAKIMDRLDSGLDAWCLRDAIISVLRATHCVPRVDRMLGRWYLKTSIFYDFCPDDLILSCPNVIMPNVLNFVKKYRDFIRSVLYKVSVSWKNQYMPGVLGASRFLEEISNSLNGVEESIPCIYLRMCATLTEIVLRNGYLREIYQENPYVIFEELAFSLFTQKWVLPFSCMTNLGLVEKANSTVFDVAIYNTCLYSLADFITVNGEHLFPALLNGSNISMNVTRYQQEAKNIFEILLSQIQVVERDTDKTVQLTVYVEVWHVSALTWLDLYQVLPETSRVTFCLIIPGIFMDRYELKRAQWSLFHKNIAFELGKCDEVTFSTKYLEFERTTDHAKITMASFVEKICRCLKRGRMGLIFRKNVYQYSMIPHVPLYCGGDFLDVLPVRDGINTCLRMLLNVVHFLGDEVSDELTEEIDFVRLQCKFFMFNELRRVVRKMVLVANAVIDYAVDNKDFLREGIVDGRSLGICITGLHSVFMTVGLSYAHPDACRLYRMMCEHIYYTCVRTSVDCCMKGAEPCNLFDRSKYALGMLYFDQFDNVECTLPEELWTTLRKDVLMHGVRNIHFTAGTAMQKEFDIINSSESFWPMEDNKILRRSNIKVVIGKDGLNDVTSVYSSELKSLYIPVYNNLLLNRFNKHQQYLKTVGYRVLNVDTNLFTDKELDDLAVFKDGFSYPLNDLIEMYKSGLPFLDQGQANVFYFNDTVSLKHLLPLLYKTGFKVAMYKVLCSSEMYKHLDLSNPLPLIGKCSDGVVMHVKNIL.

It belongs to the ribonucleoside diphosphate reductase large chain family. In terms of assembly, the genome of human herpesvirus-6 does not code for a ribonucleotide reductase small subunit.

It is found in the virion. It localises to the host cytoplasm. Functionally, does not possess a ribonucleotide reductase activity. Betaherpesviruses probably use another strategy to expand the dNTP pool in a quiescent host cell. The sequence is that of Ribonucleoside-diphosphate reductase large subunit-like protein from Human herpesvirus 6B (strain Z29) (HHV-6 variant B).